The following is a 76-amino-acid chain: DNA-binding protein S1FA2 (76 aa).

The Nuclear localization signal motif lies at 50 to 55 (PPRKKK). The segment covering 51 to 66 (PRKKKPLSKKKLKREK) has biased composition (basic residues). Residues 51–76 (PRKKKPLSKKKLKREKLKQGVPVPGE) are disordered.

Belongs to the S1FA transcription factor family.

The protein resides in the nucleus. Functionally, DNA-binding protein that specifically recognizes a negative element (S1F) within the RPS1 promoter. This is DNA-binding protein S1FA2 (S1FA2) from Arabidopsis thaliana (Mouse-ear cress).